An 878-amino-acid chain; its full sequence is Pyruvate dehydrogenase phosphatase regulatory subunit, mitochondrial (878 aa).

Residues 1–93 constitute a mitochondrion transit peptide; that stretch reads MLYRLLSIVQ…CAGILSTARH (93 aa).

Belongs to the GcvT family. In terms of assembly, heterodimer of a catalytic (PDP1) and a regulatory (PDPR) subunit.

Its subcellular location is the mitochondrion matrix. Functionally, decreases the sensitivity of PDP1 to magnesium ions, and this inhibition is reversed by the polyamine spermine. The polypeptide is Pyruvate dehydrogenase phosphatase regulatory subunit, mitochondrial (Pdpr) (Mus musculus (Mouse)).